Reading from the N-terminus, the 103-residue chain is Large ribosomal subunit protein uL24 (103 aa).

The protein belongs to the universal ribosomal protein uL24 family. Part of the 50S ribosomal subunit.

One of two assembly initiator proteins, it binds directly to the 5'-end of the 23S rRNA, where it nucleates assembly of the 50S subunit. In terms of biological role, one of the proteins that surrounds the polypeptide exit tunnel on the outside of the subunit. The protein is Large ribosomal subunit protein uL24 of Syntrophomonas wolfei subsp. wolfei (strain DSM 2245B / Goettingen).